Consider the following 437-residue polypeptide: Epsilon-sarcoglycan (437 aa).

The Extracellular segment spans residues 1-317 (MLLFWWWELG…LKSRDYYTDF (317 aa)). N-linked (GlcNAc...) asparagine glycosylation is present at Asn200. A helical membrane pass occupies residues 318–338 (LVTLAVPSAVALVLFLILAYI). At 339-437 (MCCRREGVEK…QQQTTGKWYP (99 aa)) the chain is on the cytoplasmic side.

Belongs to the sarcoglycan alpha/epsilon family. N-glycosylated. In terms of processing, ubiquitinated, leading to its degradation by the proteasome. As to expression, in both neural tissues including cerebellar cortex, striatum, cerebral cortex, thalamus and hippocampus, and non-neural tissues including quadriceps muscle, liver, kidney, spleen, lung, testis and heart. Widely distributed in the brain, with a robust signal obtained from regions with dense neuronal packing such as the pyramidal cell layer of the hippocampus, cerebellar molecular layer, and cerebral cortex. Levels are highest in kidney, moderate in brain and lung, and low in skeletal muscle, liver, spleen and testis.

The protein resides in the cell membrane. It is found in the sarcolemma. Its subcellular location is the cytoplasm. It localises to the cytoskeleton. The protein localises to the cell projection. The protein resides in the dendrite. It is found in the golgi apparatus. Functionally, component of the sarcoglycan complex, a subcomplex of the dystrophin-glycoprotein complex which forms a link between the F-actin cytoskeleton and the extracellular matrix. The polypeptide is Epsilon-sarcoglycan (Rattus norvegicus (Rat)).